The chain runs to 429 residues: UDP-N-acetylglucosamine 1-carboxyvinyltransferase 2 (429 aa).

Phosphoenolpyruvate is bound at residue 22–23 (KN). Arginine 92 provides a ligand contact to UDP-N-acetyl-alpha-D-glucosamine. Catalysis depends on cysteine 116, which acts as the Proton donor. A 2-(S-cysteinyl)pyruvic acid O-phosphothioketal modification is found at cysteine 116. UDP-N-acetyl-alpha-D-glucosamine contacts are provided by residues 121 to 125 (RPIDQ), aspartate 305, and isoleucine 327.

It belongs to the EPSP synthase family. MurA subfamily.

The protein resides in the cytoplasm. The enzyme catalyses phosphoenolpyruvate + UDP-N-acetyl-alpha-D-glucosamine = UDP-N-acetyl-3-O-(1-carboxyvinyl)-alpha-D-glucosamine + phosphate. The protein operates within cell wall biogenesis; peptidoglycan biosynthesis. In terms of biological role, cell wall formation. Adds enolpyruvyl to UDP-N-acetylglucosamine. The chain is UDP-N-acetylglucosamine 1-carboxyvinyltransferase 2 from Bacillus subtilis (strain 168).